Here is a 274-residue protein sequence, read N- to C-terminus: Nitrogenase iron protein (274 aa).

An ATP-binding site is contributed by 8–15; that stretch reads GKGGIGKS. C94 is a binding site for [4Fe-4S] cluster. R97 carries the post-translational modification ADP-ribosylarginine; by dinitrogenase reductase ADP-ribosyltransferase. C131 lines the [4Fe-4S] cluster pocket.

This sequence belongs to the NifH/BchL/ChlL family. As to quaternary structure, homodimer. [4Fe-4S] cluster is required as a cofactor. The reversible ADP-ribosylation of Arg-97 inactivates the nitrogenase reductase and regulates nitrogenase activity.

It catalyses the reaction N2 + 8 reduced [2Fe-2S]-[ferredoxin] + 16 ATP + 16 H2O = H2 + 8 oxidized [2Fe-2S]-[ferredoxin] + 2 NH4(+) + 16 ADP + 16 phosphate + 6 H(+). Its function is as follows. The key enzymatic reactions in nitrogen fixation are catalyzed by the nitrogenase complex, which has 2 components: the iron protein and the molybdenum-iron protein. In Chlorobium phaeobacteroides (strain BS1), this protein is Nitrogenase iron protein.